Consider the following 314-residue polypeptide: Ribosome maturation factor RimP (314 aa).

Disordered stretches follow at residues 1–20, 152–176, and 206–314; these read MDLD…QPLS, PIEA…AKPE, and AAKA…PAPK. The segment covering 10–19 has biased composition (polar residues); the sequence is PSAQVGQQPL. The segment covering 215 to 227 has biased composition (acidic residues); sequence DGNNEEQDEEQEE. Residues 247–256 show a composition bias toward polar residues; that stretch reads PEHNPAQNPI. 2 stretches are compositionally biased toward basic and acidic residues: residues 270 to 279 and 303 to 314; these read TEFKKSKTGE and SGHDMPRKPAPK.

Belongs to the RimP family.

It localises to the cytoplasm. Functionally, required for maturation of 30S ribosomal subunits. This Beijerinckia indica subsp. indica (strain ATCC 9039 / DSM 1715 / NCIMB 8712) protein is Ribosome maturation factor RimP.